The chain runs to 110 residues: Iron-sulfur cluster assembly protein CyaY (110 aa).

It belongs to the frataxin family.

Its function is as follows. Involved in iron-sulfur (Fe-S) cluster assembly. May act as a regulator of Fe-S biogenesis. This is Iron-sulfur cluster assembly protein CyaY from Pseudomonas entomophila (strain L48).